The following is a 152-amino-acid chain: ADP-ribose glycohydrolase OARD1 (152 aa).

Residue alanine 2 is modified to N-acetylalanine. The Macro domain maps to 2 to 152 (ASSLNEDPEG…TDIKITVYTL (151 aa)). Phosphoserine is present on serine 4. Leucine 21 contributes to the substrate binding site. Catalysis depends on lysine 84, which acts as the Nucleophile. Residues 119–125 (RIGCGLD) and leucine 152 contribute to the substrate site. Residue aspartate 125 is the Proton acceptor of the active site.

Ubiquitous.

It is found in the nucleus. The protein resides in the nucleoplasm. It localises to the nucleolus. Its subcellular location is the chromosome. It carries out the reaction 2''-O-acetyl-ADP-D-ribose + H2O = ADP-D-ribose + acetate + H(+). The enzyme catalyses 5-O-(ADP-D-ribosyl)-L-glutamyl-[protein] + H2O = L-glutamyl-[protein] + ADP-D-ribose + H(+). The catalysed reaction is alpha-NAD(+) + H2O = ADP-D-ribose + nicotinamide + H(+). Its activity is regulated as follows. Subject to competitive inhibition by the product ADP-ribose. Its function is as follows. ADP-ribose glycohydrolase that hydrolyzes ADP-ribose and acts on different substrates, such as proteins ADP-ribosylated on glutamate and O-acetyl-ADP-D-ribose. Specifically acts as a glutamate mono-ADP-ribosylhydrolase by mediating the removal of mono-ADP-ribose attached to glutamate residues on proteins. Does not act on poly-ADP-ribosylated proteins: the poly-ADP-ribose chain of poly-ADP-ribosylated glutamate residues must by hydrolyzed into mono-ADP-ribosylated glutamate by PARG to become a substrate for OARD1. Deacetylates O-acetyl-ADP ribose, a signaling molecule generated by the deacetylation of acetylated lysine residues in histones and other proteins. Catalyzes the deacylation of O-acetyl-ADP-ribose, O-propionyl-ADP-ribose and O-butyryl-ADP-ribose, yielding ADP-ribose plus acetate, propionate and butyrate, respectively. In Homo sapiens (Human), this protein is ADP-ribose glycohydrolase OARD1.